The following is a 119-amino-acid chain: Chymotrypsin inhibitor WCI (119 aa).

5 disulfide bridges follow: cysteine 6–cysteine 55, cysteine 20–cysteine 44, cysteine 29–cysteine 87, cysteine 45–cysteine 105, and cysteine 57–cysteine 116.

Its subcellular location is the secreted. Functionally, inhibits bovine, insect and wheat chymotrypsins. Inhibits bovine chymotrypsin with Ki of 0.6 nM. Does not inhibit human or wheat alpha-amylases, bovine pancreatic trypsin, or trypsin-like activity isolated from wheat. This is Chymotrypsin inhibitor WCI from Triticum aestivum (Wheat).